A 152-amino-acid chain; its full sequence is 3-dehydroquinate dehydratase (152 aa).

Catalysis depends on Y25, which acts as the Proton acceptor. Substrate contacts are provided by N76, H82, and D89. H102 serves as the catalytic Proton donor. Substrate-binding positions include 103-104 and R113; that span reads LS.

The protein belongs to the type-II 3-dehydroquinase family. Homododecamer.

The catalysed reaction is 3-dehydroquinate = 3-dehydroshikimate + H2O. Its pathway is metabolic intermediate biosynthesis; chorismate biosynthesis; chorismate from D-erythrose 4-phosphate and phosphoenolpyruvate: step 3/7. In terms of biological role, catalyzes a trans-dehydration via an enolate intermediate. This is 3-dehydroquinate dehydratase from Gloeothece citriformis (strain PCC 7424) (Cyanothece sp. (strain PCC 7424)).